The sequence spans 436 residues: Carboxypeptidase A5 (436 aa).

The first 33 residues, 1–33, serve as a signal peptide directing secretion; the sequence is MQGTPGGGTRPGPSPVDRRTLLVFSFILAAALG. Positions 34-126 are cleaved as a propeptide — activation peptide; it reads QMNFTGDQVL…ERQAMAKSRR (93 aa). The Peptidase M14 domain occupies 138-431; that stretch reads SYHTLEEIYS…MALRTIMEHT (294 aa). Zn(2+) is bound by residues H196 and E199. Residues 196–199, R254, and 271–272 contribute to the substrate site; these read HSRE and NR. C265 and C288 are joined by a disulfide. H323 is a binding site for Zn(2+). Residues 324-325 and Y375 contribute to the substrate site; that span reads SY. The active-site Proton donor/acceptor is the E397.

Belongs to the peptidase M14 family. Requires Zn(2+) as cofactor. As to expression, expression is very low or not detectable.

It localises to the secreted. The chain is Carboxypeptidase A5 (CPA5) from Homo sapiens (Human).